Consider the following 298-residue polypeptide: 4-hydroxy-tetrahydrodipicolinate synthase (298 aa).

Pyruvate is bound at residue Thr48. The active-site Proton donor/acceptor is Tyr137. Catalysis depends on Lys166, which acts as the Schiff-base intermediate with substrate. Ile207 is a pyruvate binding site.

It belongs to the DapA family. As to quaternary structure, homotetramer; dimer of dimers.

Its subcellular location is the cytoplasm. The catalysed reaction is L-aspartate 4-semialdehyde + pyruvate = (2S,4S)-4-hydroxy-2,3,4,5-tetrahydrodipicolinate + H2O + H(+). It functions in the pathway amino-acid biosynthesis; L-lysine biosynthesis via DAP pathway; (S)-tetrahydrodipicolinate from L-aspartate: step 3/4. In terms of biological role, catalyzes the condensation of (S)-aspartate-beta-semialdehyde [(S)-ASA] and pyruvate to 4-hydroxy-tetrahydrodipicolinate (HTPA). In Campylobacter lari (strain RM2100 / D67 / ATCC BAA-1060), this protein is 4-hydroxy-tetrahydrodipicolinate synthase.